A 161-amino-acid chain; its full sequence is Phosphopantetheine adenylyltransferase (161 aa).

Position 9 (Ser9) interacts with substrate. ATP is bound by residues 9–10 (SF) and His17. The substrate site is built by Lys41, Val73, and Lys87. Residues 88-90 (GLR), Glu98, and 122-128 (YSFVSSS) contribute to the ATP site.

It belongs to the bacterial CoaD family. Homohexamer. Mg(2+) serves as cofactor.

It is found in the cytoplasm. It catalyses the reaction (R)-4'-phosphopantetheine + ATP + H(+) = 3'-dephospho-CoA + diphosphate. The protein operates within cofactor biosynthesis; coenzyme A biosynthesis; CoA from (R)-pantothenate: step 4/5. Its function is as follows. Reversibly transfers an adenylyl group from ATP to 4'-phosphopantetheine, yielding dephospho-CoA (dPCoA) and pyrophosphate. The chain is Phosphopantetheine adenylyltransferase from Mycobacterium bovis (strain ATCC BAA-935 / AF2122/97).